The sequence spans 947 residues: Pyruvate, phosphate dikinase 1, chloroplastic (947 aa).

The N-terminal 62 residues, 1–62, are a transit peptide targeting the chloroplast; that stretch reads MAASVSRAIC…GRGQHCSPLR (62 aa). The disordered stretch occupies residues 21–54; it reads DREATSFARRSVAAPRPPHAKAAGVIRSDSGAGR. Alanine 63 carries the N-acetylalanine; partial modification. Position 309 is a phosphothreonine (threonine 309). A Phosphoserine modification is found at serine 506. Threonine 527 is subject to Phosphothreonine; by PDRP1. Serine 528 carries the phosphoserine; by PDRP1 modification. Histidine 529 serves as the catalytic Tele-phosphohistidine intermediate. Substrate contacts are provided by arginine 635, arginine 692, glutamate 821, glycine 842, threonine 843, asparagine 844, and aspartate 845. Glutamate 821 serves as a coordination point for Mg(2+). Aspartate 845 contributes to the Mg(2+) binding site. The active-site Proton donor is the cysteine 907.

It belongs to the PEP-utilizing enzyme family. In terms of assembly, homotetramer. The cofactor is Mg(2+). Phosphorylation of Thr-527 in the dark inactivates the enzyme, dephosphorylation upon light stimulation reactivates the enzyme. More highly phosphorylated when grown under high rather than low light regimes (70 vs 900 umol photons/m-2/s). the degree of phosphorylation is strictly regulated by light intensity and the light/dark transition has no influence. Phosphorylated in both mesophyll and bundle sheath cells. The phosphorylation at Ser-528 may be important for the phosphorylation at Thr-527 and may also be regulated by light intensity. Isoform C4PPDKZM1 mainly localized in mesophyll cells and only a low level is found in bundle sheath cells. Isoform CYPPDKZM1 expressed in roots, stems and etiolated leaves.

The protein resides in the plastid. The protein localises to the chloroplast. Its subcellular location is the cytoplasm. The catalysed reaction is pyruvate + phosphate + ATP = phosphoenolpyruvate + AMP + diphosphate + H(+). Its pathway is photosynthesis; C4 acid pathway. With respect to regulation, activated by light-induced dephosphorylation. Inhibited by dark-induced phosphorylation. Both reactions are catalyzed by PDRP1. Inactivated by cold due to the dissociation of the homotetramer. Independent of circadian regulation. Functionally, formation of phosphoenolpyruvate, which is the primary acceptor of CO(2) in C4 and some Crassulacean acid metabolism plants. The chain is Pyruvate, phosphate dikinase 1, chloroplastic from Zea mays (Maize).